We begin with the raw amino-acid sequence, 193 residues long: MKEPMTKLENPVLMATIGGAQGLRGEVRAKAYTADPTALGDYGHLHSMDGRSFEILEIREMKNVVVVRFRGINDRNAAEALNGLELYIERDNLPDEELEDDEFYYADLEGLEARDDQGVSYGTVTGVFDFGAGDLLELKGPGKRPVLIPFSEASVLEIDLEAGTLLIDPLAAGLVDDPEELSKFTPDKPKKKK.

Positions 100-173 (DDEFYYADLE…TLLIDPLAAG (74 aa)) constitute a PRC barrel domain.

It belongs to the RimM family. Binds ribosomal protein uS19.

It localises to the cytoplasm. An accessory protein needed during the final step in the assembly of 30S ribosomal subunit, possibly for assembly of the head region. Essential for efficient processing of 16S rRNA. May be needed both before and after RbfA during the maturation of 16S rRNA. It has affinity for free ribosomal 30S subunits but not for 70S ribosomes. This chain is Ribosome maturation factor RimM, found in Rhizobium etli (strain CIAT 652).